Reading from the N-terminus, the 789-residue chain is 1-phosphatidylinositol 4,5-bisphosphate phosphodiesterase delta-3 (789 aa).

A PH domain is found at 63-172 (RAMLRGSRLR…WVRGLTKLRA (110 aa)). Residues 73–101 (KIRSRTWHKERLYRLQEDGLSVWFQRRIP) form a substrate binding region. Ser105 carries the phosphoserine modification. 3 EF-hand domains span residues 182–217 (RLDH…VNVD), 218–253 (MNDM…LLKR), and 250–285 (LLKR…QGEE). The Ca(2+) site is built by Asp195, Asn197, Asp199, Lys201, Glu206, Asp231, Ser233, Asn235, Arg237, and Glu242. In terms of domain architecture, PI-PLC X-box spans 337–482 (QDMNQPLAHY…LKGRVLVKGK (146 aa)). Residue His352 is part of the active site. Ca(2+) contacts are provided by Asn353, Glu382, and Asp384. His397 is a catalytic residue. Glu431 contributes to the Ca(2+) binding site. The segment at 461 to 519 (SPNPEELPSPEQLKGRVLVKGKKLPAARSEDGRALSDREEEEEDDEEEEEEVEAAAQRR) is disordered. The substrate site is built by Lys480 and Lys482. The segment covering 488-497 (RSEDGRALSD) has biased composition (basic and acidic residues). At Ser496 the chain carries Phosphoserine. The segment covering 498–513 (REEEEEDDEEEEEEVE) has biased composition (acidic residues). Residues 528–644 (LSALAVYCHA…GYVLKPACLR (117 aa)) enclose the PI-PLC Y-box domain. Ser557 lines the substrate pocket. At Ser573 the chain carries Phosphoserine. Residue Arg584 participates in substrate binding. The C2 domain maps to 644-769 (RQPDSTFDPE…QGYRHIHLLS (126 aa)). The Ca(2+) site is built by Ile683, Asp685, Asn709, Asp738, Tyr739, and Asp740.

Ca(2+) serves as cofactor. In terms of tissue distribution, present in corneal epithelial cells (at protein level).

The protein resides in the membrane. It localises to the cytoplasm. The protein localises to the cleavage furrow. It carries out the reaction a 1,2-diacyl-sn-glycero-3-phospho-(1D-myo-inositol-4,5-bisphosphate) + H2O = 1D-myo-inositol 1,4,5-trisphosphate + a 1,2-diacyl-sn-glycerol + H(+). Its activity is regulated as follows. Strongly activated by phosphatidic acid. Inhibited by phosphatidylethanolamine (PtdEtn), phosphatidylcholine (PtdCho), sphingomyelin and phosphatidylserine (PtdSer). Its function is as follows. Hydrolyzes the phosphatidylinositol 4,5-bisphosphate (PIP2) to generate 2 second messenger molecules diacylglycerol (DAG) and inositol 1,4,5-trisphosphate (IP3). DAG mediates the activation of protein kinase C (PKC), while IP3 releases Ca(2+) from intracellular stores. Essential for trophoblast and placental development. May participate in cytokinesis by hydrolyzing PIP2 at the cleavage furrow. Regulates neurite outgrowth through the inhibition of RhoA/Rho kinase signaling. The chain is 1-phosphatidylinositol 4,5-bisphosphate phosphodiesterase delta-3 from Homo sapiens (Human).